Reading from the N-terminus, the 627-residue chain is Meiosis-specific transcription factor NDT80 (627 aa).

The NDT80 DNA-binding region spans 28–335 (EEDTPVILTQ…RSPSNYASSQ (308 aa)). The tract at residues 324-410 (RGRSPSNYAS…MEASKENEDP (87 aa)) is disordered. Composition is skewed to polar residues over residues 327-351 (SPSN…SQNS) and 386-401 (SGAS…STPM).

As to quaternary structure, binds to DNA as a monomer. Post-translationally, phosphorylated by pachytene checkpoint kinase IME2, but also phosphorylated in an IME2-independent manner. Phosphorylation probably eliminates SUM1-mediated repression and is also required for full transcriptional activation activity. Phosphorylation of the DNA-binding domain by IME2 does not alter DNA binding affinity.

Its subcellular location is the nucleus. Its function is as follows. Transcription factor required for successful completion of meiosis and spore formation. Gets activated after completion of meiotic recombination at the end of prophase I. Recognizes and binds to the middle sporulation element (MSE) 5'-C[AG]CAAA[AT]-3' in the promoter region of stage-specific genes that are required for progression through meiosis and sporulation. Competes for binding to MSE with the transcriptional repressor SUM1, which represses middle sporulation-specific genes during mitosis and early sporulation. The polypeptide is Meiosis-specific transcription factor NDT80 (NDT80) (Saccharomyces cerevisiae (strain ATCC 204508 / S288c) (Baker's yeast)).